A 419-amino-acid chain; its full sequence is 3-isopropylmalate dehydratase large subunit (419 aa).

Cys-302, Cys-362, and Cys-365 together coordinate [4Fe-4S] cluster.

It belongs to the aconitase/IPM isomerase family. LeuC type 2 subfamily. Heterodimer of LeuC and LeuD. It depends on [4Fe-4S] cluster as a cofactor.

The catalysed reaction is (2R,3S)-3-isopropylmalate = (2S)-2-isopropylmalate. It functions in the pathway amino-acid biosynthesis; L-leucine biosynthesis; L-leucine from 3-methyl-2-oxobutanoate: step 2/4. Functionally, catalyzes the isomerization between 2-isopropylmalate and 3-isopropylmalate, via the formation of 2-isopropylmaleate. This Sulfurimonas denitrificans (strain ATCC 33889 / DSM 1251) (Thiomicrospira denitrificans (strain ATCC 33889 / DSM 1251)) protein is 3-isopropylmalate dehydratase large subunit.